Consider the following 190-residue polypeptide: Glutathione peroxidase 2 (190 aa).

The active site involves U40. Residue U40 is a non-standard amino acid, selenocysteine.

The protein belongs to the glutathione peroxidase family. As to quaternary structure, homotetramer.

Its subcellular location is the cytoplasm. It localises to the cytosol. The enzyme catalyses 2 glutathione + H2O2 = glutathione disulfide + 2 H2O. It carries out the reaction a hydroperoxy polyunsaturated fatty acid + 2 glutathione = a hydroxy polyunsaturated fatty acid + glutathione disulfide + H2O. It catalyses the reaction tert-butyl hydroperoxide + 2 glutathione = tert-butanol + glutathione disulfide + H2O. The catalysed reaction is cumene hydroperoxide + 2 glutathione = 2-phenylpropan-2-ol + glutathione disulfide + H2O. The enzyme catalyses (13S)-hydroperoxy-(9Z,11E)-octadecadienoate + 2 glutathione = (13S)-hydroxy-(9Z,11E)-octadecadienoate + glutathione disulfide + H2O. It carries out the reaction (5S)-hydroperoxy-(6E,8Z,11Z,14Z)-eicosatetraenoate + 2 glutathione = (5S)-hydroxy-(6E,8Z,11Z,14Z)-eicosatetraenoate + glutathione disulfide + H2O. It catalyses the reaction (12R)-hydroperoxy-(5Z,8Z,10E,14Z)-eicosatetraenoate + 2 glutathione = (12R)-hydroxy-(5Z,8Z,10E,14Z)-eicosatetraenoate + glutathione disulfide + H2O. The catalysed reaction is (15S)-hydroperoxy-(5Z,8Z,11Z,13E)-eicosatetraenoate + 2 glutathione = (15S)-hydroxy-(5Z,8Z,11Z,13E)-eicosatetraenoate + glutathione disulfide + H2O. Functionally, catalyzes the reduction of hydroperoxides in a glutathione-dependent manner thus regulating cellular redox homeostasis. Can reduce small soluble hydroperoxides such as H2O2, cumene hydroperoxide and tert-butyl hydroperoxide, as well as several fatty acid-derived hydroperoxides. Cannot reduce phosphatidycholine hydroperoxide. The chain is Glutathione peroxidase 2 (GPX2) from Sapajus apella (Brown-capped capuchin).